A 335-amino-acid polypeptide reads, in one-letter code: MKIVVTGAAGFIGSNLVKGLNARGIDDIIAVDDLTQGDKFRNLADLRIADYMDAGDFYDRFAEGAFGHVEAVFHEGACSDTMEPDGKYMMANNYTLSCNLFRACQNQNTRLLYASSAATYGGSDTFSESPEFEKPLNVYGYSKLLFDQHMRRELGMRFENAQTQVAGFRYFNVYGPREQHKGRMASVAFHQFNQFQADGKVKLFGDYGGYGPGGQMRDFVFIDDVVAVNLWFFDHPEKSGIFNLGTGRAQPFNDVAIAVVNTLRQSQNAAPLSLEDAVRGGMIDYVGFPEALVGKYQSYTQADLGALRAAGCQHVFADVQSGVTAYMQWLSNAKN.

Residues 11-12 (FI), 32-33 (DD), Lys-39, 75-79 (EGACS), and Asn-92 each bind NADP(+). The active-site Proton acceptor is the Tyr-139. Lys-143 contacts NADP(+). Asn-172 contacts substrate. Val-173 and Lys-181 together coordinate NADP(+). Lys-181 functions as the Proton acceptor in the catalytic mechanism. Residues Arg-183, His-190, 204–207 (FGDY), Arg-217, and Tyr-296 contribute to the substrate site.

The protein belongs to the NAD(P)-dependent epimerase/dehydratase family. HldD subfamily. In terms of assembly, homopentamer. NADP(+) is required as a cofactor.

It catalyses the reaction ADP-D-glycero-beta-D-manno-heptose = ADP-L-glycero-beta-D-manno-heptose. Its pathway is nucleotide-sugar biosynthesis; ADP-L-glycero-beta-D-manno-heptose biosynthesis; ADP-L-glycero-beta-D-manno-heptose from D-glycero-beta-D-manno-heptose 7-phosphate: step 4/4. Catalyzes the interconversion between ADP-D-glycero-beta-D-manno-heptose and ADP-L-glycero-beta-D-manno-heptose via an epimerization at carbon 6 of the heptose. This Polaromonas naphthalenivorans (strain CJ2) protein is ADP-L-glycero-D-manno-heptose-6-epimerase.